The following is a 63-amino-acid chain: UPF0434 protein Sde_1297 (63 aa).

This sequence belongs to the UPF0434 family.

This Saccharophagus degradans (strain 2-40 / ATCC 43961 / DSM 17024) protein is UPF0434 protein Sde_1297.